The sequence spans 361 residues: MAPIKVGINGFGRIGRMVFQSMCEDNVLGTELDVVAVVDMSTDAEYFAYQMKFDTVHGRPKYTVEVAKSSPSAKKPDVLVVNGHRILCVKADRNPADLPWGKLGVDYVIESTGLFTDKAKAEGHVKGGAKKVVISAPASGGAKTIVMGVNQHEYNPATHHVVSNASCTTNCLAPIVHVLTKENFGIETGLMTTIHSYTATQKTVDGVSIKDWRGGRAAAVNIIPSTTGAAKAVGMVIPSTKGKLTGMSFRVPTPDVSVVDLTFRATRDTSIQEIDAALKKASQTYMKGILGFTDEELVSSDFINDARSSIYDSKATLQNNLPGEKRFFKVVSWYDNEWGYSHRVVDLVRFMGAKDRSSSKL.

Residues 13–14 (RI), aspartate 39, and arginine 93 contribute to the NAD(+) site. D-glyceraldehyde 3-phosphate-binding positions include 166 to 168 (SCT), threonine 198, 227 to 228 (TG), and arginine 250. Residue cysteine 167 is the Nucleophile of the active site. An NAD(+)-binding site is contributed by asparagine 336. A Microbody targeting signal motif is present at residues 359 to 361 (SKL).

This sequence belongs to the glyceraldehyde-3-phosphate dehydrogenase family. In terms of assembly, homotetramer.

It is found in the glycosome. The catalysed reaction is D-glyceraldehyde 3-phosphate + phosphate + NAD(+) = (2R)-3-phospho-glyceroyl phosphate + NADH + H(+). It functions in the pathway carbohydrate degradation; glycolysis; pyruvate from D-glyceraldehyde 3-phosphate: step 1/5. The protein is Glyceraldehyde-3-phosphate dehydrogenase, glycosomal (GAPDG) of Crithidia fasciculata.